The primary structure comprises 372 residues: Cell division protein FtsZ 1 (372 aa).

GTP-binding positions include 51–55, 138–140, Glu-169, Arg-173, and Asp-216; these read GAGCN and GTG. The tract at residues 351 to 372 is disordered; sequence QEETPEPSEEEVPPVKIDIPEL. Residues 353-362 are compositionally biased toward acidic residues; that stretch reads ETPEPSEEEV.

Belongs to the FtsZ family. As to quaternary structure, homodimer. Polymerizes to form a dynamic ring structure in a strictly GTP-dependent manner. Interacts directly with several other division proteins.

The protein resides in the cytoplasm. Essential cell division protein that forms a contractile ring structure (Z ring) at the future cell division site. The regulation of the ring assembly controls the timing and the location of cell division. One of the functions of the FtsZ ring is to recruit other cell division proteins to the septum to produce a new cell wall between the dividing cells. Binds GTP and shows GTPase activity. This Pyrococcus abyssi (strain GE5 / Orsay) protein is Cell division protein FtsZ 1.